The chain runs to 123 residues: Iron-sulfur cluster insertion protein ErpA (123 aa).

Residues Cys51, Cys115, and Cys117 each coordinate iron-sulfur cluster.

Belongs to the HesB/IscA family. In terms of assembly, homodimer. Requires iron-sulfur cluster as cofactor.

Its function is as follows. Required for insertion of 4Fe-4S clusters for at least IspG. In Halorhodospira halophila (strain DSM 244 / SL1) (Ectothiorhodospira halophila (strain DSM 244 / SL1)), this protein is Iron-sulfur cluster insertion protein ErpA.